We begin with the raw amino-acid sequence, 326 residues long: MAFTPFPPRQPTASARLPLTLMTLDDWALATITGADSEKYLQGQVTADVSQMTDDQHLLAAHCDAKGKMWSNLRLFRDGDGFAWIERRSVREPQLAELKKYAVFSKVTIAPDDERVLLGVAGFQARAALANIFSELPSKEKQVVKEGATTLLWFEHPAERFLIVTDEATANMLTDKLRGEAELNNSQQWLALNIEAGFPVIDAANSGQFIPQATNLQALGGISFKKGCYTGQEMVARAKFRGANKRALWLLTGSASRLPEAGEDLELKMGENWRRTGTVLAAVKLEDGQVVVQVVMNNDMEPDSIFRVRDDANTLCIEPLPYSLEE.

Positions 27 and 189 each coordinate folate.

The protein belongs to the tRNA-modifying YgfZ family.

It localises to the cytoplasm. Folate-binding protein involved in regulating the level of ATP-DnaA and in the modification of some tRNAs. It is probably a key factor in regulatory networks that act via tRNA modification, such as initiation of chromosomal replication. The polypeptide is tRNA-modifying protein YgfZ (Escherichia coli O157:H7 (strain EC4115 / EHEC)).